The following is a 207-amino-acid chain: Thymidylate kinase (207 aa).

10–17 (GIEGSGKS) lines the ATP pocket.

The protein belongs to the thymidylate kinase family.

The catalysed reaction is dTMP + ATP = dTDP + ADP. Phosphorylation of dTMP to form dTDP in both de novo and salvage pathways of dTTP synthesis. This Halothermothrix orenii (strain H 168 / OCM 544 / DSM 9562) protein is Thymidylate kinase.